Reading from the N-terminus, the 463-residue chain is MRQENDSLGIVMVPEDKLFGAQTGRSKNFFSYGKELMPIEVIQALVKIKKCAAKANGDLQCLDAKRRDMIVAASDEILSGGLEEHFPLKVWQTGSGTQSNMNVNEVIANLAIKRHGGELGSKNPVHPNDHVNKSQSSNDVFPTAMHIAAVQSIKGSLIPALEHLQKNLDAKALEFSRDIKIGRTHLMDAVPMTLGQEFSGYSHQLRSCLERIGFSLTHLYELAIGGTAVGTGLNVPEGFVDKVIYYLRQETGEPFIPASNYFAALSNHDALVQAHGSLAVLACSLIKIATDLSFLGSGPRCGLGEIFFPENEPGSSIMPGKINPTQSEALQMVCSQVIGNNQSVIFSGTKGNFELNVMKPVIIYDFLQSVNLLSGAMRSFADYFVSGLKVNRGQLQQNVERSLMLVTALAPVLGYDKCSKIALKAFHENLSLKEACVSLGFLSEQEFDTHVVPGLMLGKRERE.

Substrate contacts are provided by residues 95-97, 126-129, 136-138, and threonine 184; these read SGT, HPND, and SSN. The active-site Proton donor/acceptor is histidine 185. The active site involves serine 315. Residues serine 316 and 321–323 each bind substrate; that span reads KIN.

Belongs to the class-II fumarase/aspartase family. Fumarase subfamily. In terms of assembly, homotetramer.

It is found in the cytoplasm. It catalyses the reaction (S)-malate = fumarate + H2O. It participates in carbohydrate metabolism; tricarboxylic acid cycle; (S)-malate from fumarate: step 1/1. Its function is as follows. Involved in the TCA cycle. Catalyzes the stereospecific interconversion of fumarate to L-malate. In Chlamydia muridarum (strain MoPn / Nigg), this protein is Fumarate hydratase class II.